Reading from the N-terminus, the 577-residue chain is Copine-8 (577 aa).

C2 domains follow at residues 19–146 (TSAT…RLEK) and 155–278 (KCGT…FNVY). Ca(2+) is bound by residues Asp-52, Asp-58, Asp-112, Asp-114, Ser-117, Lys-122, Asp-124, Asp-186, Asp-192, Asp-248, Asp-250, and Asp-256. Phosphoserine is present on Ser-273. A VWFA domain is found at 322 to 523 (NFTVAIDFTA…VQFVPFRDYI (202 aa)).

Belongs to the copine family. It depends on Ca(2+) as a cofactor.

Functionally, probable calcium-dependent phospholipid-binding protein that may play a role in calcium-mediated intracellular processes. In Mus musculus (Mouse), this protein is Copine-8.